Consider the following 355-residue polypeptide: Syntaxin-5 (355 aa).

Residues methionine 1 to arginine 333 lie on the Cytoplasmic side of the membrane. A compositionally biased stretch (polar residues) spans proline 28–aspartate 37. The segment at proline 28 to leucine 47 is disordered. Residues isoleucine 245 to methionine 247 carry the IxM motif; signal for cargo packaging into COPII-coated vesicles motif. One can recognise a t-SNARE coiled-coil homology domain in the interval aspartate 263–tyrosine 325. A coiled-coil region spans residues phenylalanine 287 to alanine 318. The helical; Anchor for type IV membrane protein transmembrane segment at tryptophan 334–leucine 354 threads the bilayer. Residue alanine 355 is a topological domain, vesicular.

Belongs to the syntaxin family. As to quaternary structure, part of a ternary complex containing STX5A, NSFL1C and VCP. Part of a unique SNARE complex composed of the Golgi SNAREs GOSR1, GOSR2 and YKT6. This complex also includes VTI1A. Component of a SNARE complex consisting of STX5, YKT6, GOSR1 and BET1L. Interacts with BET1L. Interacts with BET1. Interacts with COG4. Interacts with GM130/GOLGA2. Interacts (via IxM motif) with SEC24C and SEC24D; mediates STX5 packaging into COPII-coated vesicles. Interacts with VLDLR; this interaction mediates VLDLR translocation from the endoplasmic reticulum to the plasma membrane.

Its subcellular location is the endoplasmic reticulum-Golgi intermediate compartment membrane. It is found in the golgi apparatus membrane. Mediates endoplasmic reticulum to Golgi transport. Together with p115/USO1 and GM130/GOLGA2, involved in vesicle tethering and fusion at the cis-Golgi membrane to maintain the stacked and inter-connected structure of the Golgi apparatus. The polypeptide is Syntaxin-5 (STX5) (Bos taurus (Bovine)).